Reading from the N-terminus, the 115-residue chain is U3-lycotoxin-Ls1e (115 aa).

Positions 1–20 (MKFVLLFGVLSLTLFSYSSA) are cleaved as a signal peptide. Residues 21–44 (EMLDDFDQADEDELLSLIEKEEAR) constitute a propeptide that is removed on maturation. 4 disulfide bridges follow: Cys48–Cys63, Cys55–Cys72, Cys62–Cys87, and Cys74–Cys85.

It belongs to the neurotoxin 19 (CSTX) family. 01 subfamily. As to expression, expressed by the venom gland.

The protein localises to the secreted. The sequence is that of U3-lycotoxin-Ls1e from Lycosa singoriensis (Wolf spider).